Consider the following 228-residue polypeptide: F-box protein At5g67140 (228 aa).

One can recognise an F-box domain in the interval E4–T51.

The chain is F-box protein At5g67140 from Arabidopsis thaliana (Mouse-ear cress).